Reading from the N-terminus, the 231-residue chain is Lipoprotein-releasing system ATP-binding protein LolD (231 aa).

Residues 6–231 form the ABC transporter domain; that stretch reads LQVQAVSKSY…YLQAVAEHAQ (226 aa). 42–49 serves as a coordination point for ATP; the sequence is GTSGSGKS.

This sequence belongs to the ABC transporter superfamily. Lipoprotein translocase (TC 3.A.1.125) family. In terms of assembly, the complex is composed of two ATP-binding proteins (LolD) and two transmembrane proteins (LolC and LolE).

It is found in the cell inner membrane. In terms of biological role, part of the ABC transporter complex LolCDE involved in the translocation of mature outer membrane-directed lipoproteins, from the inner membrane to the periplasmic chaperone, LolA. Responsible for the formation of the LolA-lipoprotein complex in an ATP-dependent manner. The sequence is that of Lipoprotein-releasing system ATP-binding protein LolD from Shewanella sp. (strain MR-4).